Consider the following 512-residue polypeptide: Cytochrome P450 4d1 (512 aa).

Heme-binding residues include Glu316 and Cys456.

This sequence belongs to the cytochrome P450 family. Heme is required as a cofactor.

The protein resides in the endoplasmic reticulum membrane. It is found in the microsome membrane. Involved in the metabolism of insect hormones and in the breakdown of synthetic insecticides. The sequence is that of Cytochrome P450 4d1 (Cyp4d1) from Drosophila melanogaster (Fruit fly).